A 316-amino-acid polypeptide reads, in one-letter code: Ribosomal RNA small subunit methyltransferase H (316 aa).

S-adenosyl-L-methionine is bound by residues 35–37 (SGH), D55, F84, D105, and Q112.

Belongs to the methyltransferase superfamily. RsmH family.

The protein localises to the cytoplasm. The enzyme catalyses cytidine(1402) in 16S rRNA + S-adenosyl-L-methionine = N(4)-methylcytidine(1402) in 16S rRNA + S-adenosyl-L-homocysteine + H(+). Functionally, specifically methylates the N4 position of cytidine in position 1402 (C1402) of 16S rRNA. In Streptococcus dysgalactiae subsp. equisimilis (strain GGS_124), this protein is Ribosomal RNA small subunit methyltransferase H.